Consider the following 628-residue polypeptide: Chaperone protein HtpG (628 aa).

The interval 1–340 (MKGQETRGFQ…SNDLPLNVSR (340 aa)) is a; substrate-binding. Residues 341-556 (EILQDSRVTQ…ADDMTTQMAK (216 aa)) are b. The c stretch occupies residues 557-628 (LFAAAGQAAP…IRRMNQLLNA (72 aa)).

Belongs to the heat shock protein 90 family. In terms of assembly, homodimer.

It localises to the cytoplasm. Molecular chaperone. Has ATPase activity. The chain is Chaperone protein HtpG from Sodalis glossinidius (strain morsitans).